Consider the following 624-residue polypeptide: tRNA uridine 5-carboxymethylaminomethyl modification enzyme MnmG (624 aa).

Residues 16–21 (GAGHAG), valine 128, and serine 183 each bind FAD. Position 275-289 (275-289 (GPRYCPSIEDKVVRF)) interacts with NAD(+). Residue glutamine 372 participates in FAD binding.

Belongs to the MnmG family. In terms of assembly, homodimer. Heterotetramer of two MnmE and two MnmG subunits. FAD serves as cofactor.

The protein resides in the cytoplasm. Its function is as follows. NAD-binding protein involved in the addition of a carboxymethylaminomethyl (cmnm) group at the wobble position (U34) of certain tRNAs, forming tRNA-cmnm(5)s(2)U34. The sequence is that of tRNA uridine 5-carboxymethylaminomethyl modification enzyme MnmG from Geobacter metallireducens (strain ATCC 53774 / DSM 7210 / GS-15).